The primary structure comprises 84 residues: Large ribosomal subunit protein bL27 (84 aa).

Residues 1-24 (MAHKKGGGSSKNGRDSNSQRLGVK) are disordered.

It belongs to the bacterial ribosomal protein bL27 family.

The chain is Large ribosomal subunit protein bL27 from Leptospira borgpetersenii serovar Hardjo-bovis (strain JB197).